The chain runs to 256 residues: Acetyl-coenzyme A carboxylase carboxyl transferase subunit alpha (256 aa).

One can recognise a CoA carboxyltransferase C-terminal domain in the interval 1–236 (MTKITRIIKE…KEEIAAELDS (236 aa)).

Belongs to the AccA family. As to quaternary structure, acetyl-CoA carboxylase is a heterohexamer composed of biotin carboxyl carrier protein (AccB), biotin carboxylase (AccC) and two subunits each of ACCase subunit alpha (AccA) and ACCase subunit beta (AccD).

Its subcellular location is the cytoplasm. It catalyses the reaction N(6)-carboxybiotinyl-L-lysyl-[protein] + acetyl-CoA = N(6)-biotinyl-L-lysyl-[protein] + malonyl-CoA. It participates in lipid metabolism; malonyl-CoA biosynthesis; malonyl-CoA from acetyl-CoA: step 1/1. In terms of biological role, component of the acetyl coenzyme A carboxylase (ACC) complex. First, biotin carboxylase catalyzes the carboxylation of biotin on its carrier protein (BCCP) and then the CO(2) group is transferred by the carboxyltransferase to acetyl-CoA to form malonyl-CoA. The sequence is that of Acetyl-coenzyme A carboxylase carboxyl transferase subunit alpha from Streptococcus sanguinis (strain SK36).